Reading from the N-terminus, the 514-residue chain is MNNTFKYVNEDVSGTEGEESDYDPSEFIRGYHESPRSPRLIDYEMGRGLMGNFKGLGINKVRQSNEYDNDTDYSSRKSSKIINDVIHGHMEVPDYIMDFIDTEQFQRLRDLKQVGTTSFVFPCASHSRFEHSIGVSHLAGKYIDRIKVTQPELEITEREQKFVRIAGLCHDLGHGPFSHAFESWVDQLGGSKRFHHEDMSIKMLNWIIDDHGLDEYDSDDIKFISSLIQGKHRPKERAFIYDIVANNRNSVDVDKFDYLSRDSYYLGRSTVCDFQRLMEFSKVIDDQICFLSKEIYNLYELFHTRYSLHKLVYTHKVGKSIEFMIADAFTEADQFLKISDQLEDPKEFINLSDSLLRRIETSKEPELEKSRKIIKNIRNRNLYKFVDEIIVSTDKIRWSADSLAEDIAKVGNGILESDIIVQNLKLNYAFKDKDPVQSTRFYTRYDSTQSFTIKKEETSHLIPNQFQEERIRIFCRSKEKCEQVQTAFRKLLKNHNLSPNPSFTVSPARNIKKI.

Positions 1 to 24 are disordered; it reads MNNTFKYVNEDVSGTEGEESDYDP. K80 serves as a coordination point for GTP. N83 contacts a 2'-deoxyribonucleoside 5'-triphosphate. GTP is bound at residue 101–109; it reads DTEQFQRLR. Substrate is bound by residues Q113 and R128. The HD domain maps to 128–259; sequence RFEHSIGVSH…SVDVDKFDYL (132 aa). Residues H131, H170, and D171 each contribute to the Zn(2+) site. Residue H174 coordinates substrate. The active site involves H196. Substrate is bound by residues 252-258, Y258, and D262; that span reads DVDKFDY. D254 contacts Zn(2+). A 2'-deoxyribonucleoside 5'-triphosphate-binding positions include R276, 291 to 293, and N297; that span reads LSK. Substrate contacts are provided by residues R305 and 309–314; that span reads HKLVYT. 2 residues coordinate a 2'-deoxyribonucleoside 5'-triphosphate: H315 and K316. GTP contacts are provided by R380 and K384.

Belongs to the SAMHD1 family. In terms of assembly, homodimer; in absence of GTP and dNTP. Homotetramer; in GTP- and dNTP-bound form. Zn(2+) serves as cofactor.

It catalyses the reaction a 2'-deoxyribonucleoside 5'-triphosphate + H2O = a 2'-deoxyribonucleoside + triphosphate + H(+). Its activity is regulated as follows. Allosterically activated and regulated via the combined actions of GTP and dNTPs (dATP, dGTP, dTTP and dCTP): Allosteric site 1 binds GTP, while allosteric site 2 binds dNTP. Allosteric activation promotes the formation of highly active homotetramers. Its function is as follows. Has deoxynucleoside triphosphate (dNTPase) activity. The chain is Deoxynucleoside triphosphate triphosphohydrolase SAMHD1 homolog from Dictyostelium discoideum (Social amoeba).